A 778-amino-acid chain; its full sequence is Ribonucleoside-diphosphate reductase large subunit (778 aa).

Residues S177, 192-193 (SC), G221, 419-423 (NLCIE), and 613-617 (PTATS) each bind substrate. The cysteines at positions 193 and 439 are disulfide-linked. Residue N419 is the Proton acceptor of the active site. The active-site Cysteine radical intermediate is the C421. Residue E423 is the Proton acceptor of the active site.

The protein belongs to the ribonucleoside diphosphate reductase large chain family. Heterotetramer composed of a homodimer of the large subunit (R1) and a homodimer of the small subunit (R2). Larger multisubunit protein complex are also active, composed of (R1)n(R2)n.

It carries out the reaction a 2'-deoxyribonucleoside 5'-diphosphate + [thioredoxin]-disulfide + H2O = a ribonucleoside 5'-diphosphate + [thioredoxin]-dithiol. With respect to regulation, under complex allosteric control mediated by deoxynucleoside triphosphates and ATP binding. The type of nucleotide bound at the specificity site determines substrate preference. It seems probable that ATP makes the enzyme reduce CDP and UDP, dGTP favors ADP reduction and dTTP favors GDP reduction. Functionally, ribonucleoside-diphosphate reductase holoenzyme provides the precursors necessary for viral DNA synthesis. Allows virus growth in non-dividing cells. Catalyzes the biosynthesis of deoxyribonucleotides from the corresponding ribonucleotides. This chain is Ribonucleoside-diphosphate reductase large subunit, found in Ornithodoros (relapsing fever ticks).